Consider the following 932-residue polypeptide: Chaperone protein ClpC3, chloroplastic (932 aa).

The tract at residues 1–20 (MERTLLNPPPSLRSPACRTT) is disordered. The N-terminal 48 residues, 1 to 48 (MERTLLNPPPSLRSPACRTTTATRIRPSSSMATMIPTPPPMRHARLVK), are a transit peptide targeting the chloroplast. The Clp R domain occupies 99 to 240 (FDMFTDKAIK…RSEVIRMISD (142 aa)). Repeat regions lie at residues 102–167 (FTDK…AGRG) and 177–240 (FTPA…MISD). An i region spans residues 264–511 (LLEYGTNLTK…LVRLRNAQLP (248 aa)). ATP is bound at residue 309–316 (GEPGVGKT). The UVR domain maps to 518-553 (EKKLKKIMAEKSEAIRSQDFEKAGALRGEEVELKSE). The II stretch occupies residues 579 to 770 (VTEADVQHIV…LIIMTSNVGS (192 aa)). An ATP-binding site is contributed by 653–660 (GPTGVGKS).

The protein belongs to the ClpA/ClpB family. ClpC subfamily.

The protein resides in the plastid. It is found in the chloroplast. Its function is as follows. Molecular chaperone that may interact with a ClpP-like protease involved in degradation of denatured proteins in the chloroplast. The polypeptide is Chaperone protein ClpC3, chloroplastic (CLPC3) (Oryza sativa subsp. japonica (Rice)).